The chain runs to 502 residues: Cytochrome P450 monooxygenase verC (502 aa).

The chain crosses the membrane as a helical span at residues 9–29 (IAALPMVSLLGAALIVVSVLG). Asn-124, Asn-190, Asn-271, and Asn-342 each carry an N-linked (GlcNAc...) asparagine glycan. Heme is bound at residue Cys-444.

Belongs to the cytochrome P450 family. Heme is required as a cofactor.

Its subcellular location is the membrane. Its pathway is mycotoxin biosynthesis. In terms of biological role, cytochrome P450 monooxygenase; part of the gene cluster that mediates the biosynthesis of 11'-deoxyverticillin A, one of the dimeric epipolythiodioxopiperazines (ETPs) from the verticillin family that act as mycotoxins. 11'-deoxyverticillin A is required for normal conidiation. The nonribosomal peptide synthetase verP is speculated to be responsible for condensation of amino acids to form the carbon skeleton of verticillin, whereas the cluster-specific tailoring enzymes are involved in further modifications leading to the production of 11'-deoxyverticillin A. This is Cytochrome P450 monooxygenase verC from Clonostachys rogersoniana.